The primary structure comprises 265 residues: Glutamate racemase (265 aa).

Substrate is bound by residues 12 to 13 and 44 to 45; these read DS and YG. Cys75 (proton donor/acceptor) is an active-site residue. A substrate-binding site is contributed by 76 to 77; it reads NT. The Proton donor/acceptor role is filled by Cys186. 187–188 serves as a coordination point for substrate; the sequence is TH.

This sequence belongs to the aspartate/glutamate racemases family.

It catalyses the reaction L-glutamate = D-glutamate. It functions in the pathway cell wall biogenesis; peptidoglycan biosynthesis. Its function is as follows. Provides the (R)-glutamate required for cell wall biosynthesis. The chain is Glutamate racemase from Pseudomonas entomophila (strain L48).